The chain runs to 396 residues: Small ribosomal subunit protein uS9m (396 aa).

The disordered stretch occupies residues 374 to 396 (PRVRERKKPGQEGARRKFTWKKR).

It belongs to the universal ribosomal protein uS9 family. As to quaternary structure, component of the mitochondrial ribosome small subunit (28S) which comprises a 12S rRNA and about 30 distinct proteins.

Its subcellular location is the mitochondrion. In Bos taurus (Bovine), this protein is Small ribosomal subunit protein uS9m (MRPS9).